The chain runs to 115 residues: Flagellar transcriptional regulator FlhD (115 aa).

This sequence belongs to the FlhD family. As to quaternary structure, homodimer; disulfide-linked. Forms a heterohexamer composed of two FlhC and four FlhD subunits. Each FlhC binds a FlhD dimer, forming a heterotrimer, and a hexamer assembles by dimerization of two heterotrimers.

It localises to the cytoplasm. Functions in complex with FlhC as a master transcriptional regulator that regulates transcription of several flagellar and non-flagellar operons by binding to their promoter region. Activates expression of class 2 flagellar genes, including fliA, which is a flagellum-specific sigma factor that turns on the class 3 genes. Also regulates genes whose products function in a variety of physiological pathways. This chain is Flagellar transcriptional regulator FlhD, found in Edwardsiella ictaluri (strain 93-146).